Reading from the N-terminus, the 151-residue chain is Probable transcriptional regulator syrB3 (151 aa).

The disordered stretch occupies residues 1-65 (MVDESNAGPV…QERSEKLRLI (65 aa)). Low complexity predominate over residues 7-23 (AGPVAPAVVADAEVKAP). Residues 52 to 65 (GYSEQERSEKLRLI) show a composition bias toward basic and acidic residues.

It belongs to the SyrB family.

The chain is Probable transcriptional regulator syrB3 (syrB3) from Rhizobium meliloti (strain 1021) (Ensifer meliloti).